A 105-amino-acid polypeptide reads, in one-letter code: Cuticle protein AMP1B (105 aa).

The segment at 1–21 (DRDAQTLTDERSDQGDGNFRY) is disordered. The Chitin-binding type R&amp;R domain occupies 16 to 81 (DGNFRYEFET…PSSDLLPVPP (66 aa)).

In terms of tissue distribution, arthrodial membrane.

The polypeptide is Cuticle protein AMP1B (Homarus americanus (American lobster)).